The following is a 324-amino-acid chain: tRNA(Ile)-lysidine synthase (324 aa).

Position 33–38 (33–38 (SGGPDS)) interacts with ATP.

It belongs to the tRNA(Ile)-lysidine synthase family.

The protein resides in the cytoplasm. The enzyme catalyses cytidine(34) in tRNA(Ile2) + L-lysine + ATP = lysidine(34) in tRNA(Ile2) + AMP + diphosphate + H(+). Its function is as follows. Ligates lysine onto the cytidine present at position 34 of the AUA codon-specific tRNA(Ile) that contains the anticodon CAU, in an ATP-dependent manner. Cytidine is converted to lysidine, thus changing the amino acid specificity of the tRNA from methionine to isoleucine. In Thermobifida fusca (strain YX), this protein is tRNA(Ile)-lysidine synthase.